Reading from the N-terminus, the 151-residue chain is S-protein homolog 1 (151 aa).

Positions 1–18 (MNCIKQFLLAICFSLALT) are cleaved as a signal peptide.

It belongs to the plant self-incompatibility (S1) protein family. Restricted to floral tissues.

It localises to the secreted. The chain is S-protein homolog 1 from Arabidopsis thaliana (Mouse-ear cress).